The chain runs to 381 residues: 1-deoxy-D-xylulose 5-phosphate reductoisomerase (381 aa).

The NADPH site is built by Gly-13, Ser-14, Ile-15, Asn-40, and Asn-114. Position 115 (Lys-115) interacts with 1-deoxy-D-xylulose 5-phosphate. Glu-116 is an NADPH binding site. Asp-140 contributes to the Mn(2+) binding site. Residues Ser-141, Glu-142, Ser-166, and His-189 each contribute to the 1-deoxy-D-xylulose 5-phosphate site. Position 142 (Glu-142) interacts with Mn(2+). Gly-195 contributes to the NADPH binding site. Positions 202, 207, 208, and 211 each coordinate 1-deoxy-D-xylulose 5-phosphate. A Mn(2+)-binding site is contributed by Glu-211.

The protein belongs to the DXR family. It depends on Mg(2+) as a cofactor. Mn(2+) is required as a cofactor.

The enzyme catalyses 2-C-methyl-D-erythritol 4-phosphate + NADP(+) = 1-deoxy-D-xylulose 5-phosphate + NADPH + H(+). It functions in the pathway isoprenoid biosynthesis; isopentenyl diphosphate biosynthesis via DXP pathway; isopentenyl diphosphate from 1-deoxy-D-xylulose 5-phosphate: step 1/6. Functionally, catalyzes the NADPH-dependent rearrangement and reduction of 1-deoxy-D-xylulose-5-phosphate (DXP) to 2-C-methyl-D-erythritol 4-phosphate (MEP). The sequence is that of 1-deoxy-D-xylulose 5-phosphate reductoisomerase from Treponema denticola (strain ATCC 35405 / DSM 14222 / CIP 103919 / JCM 8153 / KCTC 15104).